Reading from the N-terminus, the 342-residue chain is Heat-inducible transcription repressor HrcA (342 aa).

The protein belongs to the HrcA family.

Its function is as follows. Negative regulator of class I heat shock genes (grpE-dnaK-dnaJ and groELS operons). Prevents heat-shock induction of these operons. This chain is Heat-inducible transcription repressor HrcA, found in Corynebacterium efficiens (strain DSM 44549 / YS-314 / AJ 12310 / JCM 11189 / NBRC 100395).